A 227-amino-acid polypeptide reads, in one-letter code: GFP-like non-fluorescent chromoprotein (227 aa).

Positions 63–65 form a cross-link, 2-iminomethyl-5-imidazolinone (Glu-Gly); sequence EYG. Tyrosine 64 bears the 2,3-didehydrotyrosine mark.

It belongs to the GFP family. Homotetramer. Contains a chromophore consisting of modified amino acid residues. The chromophore is formed by autocatalytic backbone condensation between Xaa-N and Gly-(N+2), oxidation of Tyr-(N+1) to didehydrotyrosine, and formation of a double bond to the alpha-amino nitrogen of residue Xaa-N. Maturation of the chromophore requires nothing other than molecular oxygen. The precise stereochemistry of the tyrosine has not been determined.

In terms of biological role, non-fluorescent pigment protein that is lilac in color. This Radianthus crispa (Leathery sea anemone) protein is GFP-like non-fluorescent chromoprotein.